The sequence spans 673 residues: Protein transport Sec1a (673 aa).

Residues 538–591 form a disordered region; sequence SSHKEESEARTGSVRKSSAPTAVPERKATPHSMRSRRTATWARPHSSDDGYSSD.

Belongs to the STXBP/unc-18/SEC1 family. As to quaternary structure, does not bind the syntaxin KNOLLE.

Functionally, involved in the vesicle trafficking. Binds syntaxins. The protein is Protein transport Sec1a (SEC1A) of Arabidopsis thaliana (Mouse-ear cress).